We begin with the raw amino-acid sequence, 1581 residues long: Ankyrin repeat domain-containing protein 26 (1581 aa).

Residues 1-22 (MKKIFGFRSKGPSPLGPSARPR) are disordered. Ser13 carries the post-translational modification Phosphoserine. ANK repeat units lie at residues 46–76 (KDMGKIHKAASVGDVAKVQHILILGKSGVND), 80–109 (KDRTALHLACAYGHPEVVTLLVERKCEIDA), 113–142 (ESSTALIKAVQCQEEECAAILLDHGADPNV), 146–175 (SGNTALHYAVYSENTSMAAKLLAHNANIEA), and 179–208 (DDLTPMLLAVKENKQHIVEFLVKKKASIHA). Disordered regions lie at residues 225 to 270 (RLQR…FDNK), 299 to 343 (LDNG…PVEG), 361 to 381 (SASQEQPNHDNLTRADGWHKS), and 488 to 652 (VLNK…QTAA). Over residues 229–250 (SENSNPVDNGSEDGSLTRSYNT) the composition is skewed to polar residues. 2 positions are modified to phosphoserine: Ser239 and Ser260. The span at 308-319 (SDSPSESEDAIE) shows a compositional bias: acidic residues. Polar residues predominate over residues 327–337 (RVQTLSPSRQS). Over residues 367–381 (PNHDNLTRADGWHKS) the composition is skewed to basic and acidic residues. A compositionally biased stretch (polar residues) spans 491–504 (KTETVGMTDAQTFK). Composition is skewed to basic and acidic residues over residues 505-516 (SEPESVSREEQT), 524-538 (SQQKVEEKRKYKNNE), and 585-601 (KEAKKMENEKWVSREPA). Ser511 carries the phosphoserine modification. 4 coiled-coil regions span residues 715–845 (RSHC…NARM), 876–1345 (HEKE…MVEH), 1396–1470 (RSQM…RSLL), and 1521–1550 (LTKMHQELEKSINRELKEATAELESEFCRV).

In terms of assembly, interacts with TRIO. Interacts with GPS2. Interacts with CCDC85B. Interacts with HMMR. Widely expressed. Expressed in the arcuate and ventromedial nuclei within the hypothalamus and in the ependyma and the circumventricular organs (at protein level).

Its subcellular location is the cytoplasm. The protein resides in the cytosol. Functionally, acts as a regulator of adipogenesis. Involved in the regulation of the feeding behavior. This Mus musculus (Mouse) protein is Ankyrin repeat domain-containing protein 26 (Ankrd26).